A 633-amino-acid polypeptide reads, in one-letter code: DNA mismatch repair protein MutL (633 aa).

Disordered stretches follow at residues 337–364 (RPDDQLAPPGATSLTEPRPTGAAAGEFG) and 383–405 (VGWSGGSSASGGSSGYSAYTRPE). Over residues 385–396 (WSGGSSASGGSS) the composition is skewed to gly residues.

It belongs to the DNA mismatch repair MutL/HexB family.

Functionally, this protein is involved in the repair of mismatches in DNA. It is required for dam-dependent methyl-directed DNA mismatch repair. May act as a 'molecular matchmaker', a protein that promotes the formation of a stable complex between two or more DNA-binding proteins in an ATP-dependent manner without itself being part of a final effector complex. The protein is DNA mismatch repair protein MutL of Pseudomonas aeruginosa (strain UCBPP-PA14).